We begin with the raw amino-acid sequence, 171 residues long: Acetyltransferase PA2271 (171 aa).

An N-acetyltransferase domain is found at 3–162 (YRIRTSRDED…HEQEIGFAAD (160 aa)). CoA-binding positions include 84–86 (LSI) and 128–130 (PFY).

In terms of biological role, catalyzes the transfer of an acetyl group from acetyl coenzyme A (AcCoA) to an acceptor substrate and releases both CoA and the acetylated product. It can use a variety of substrates including spermidine, spermine and N(8)-acetylspermidine, 7-aminocephalosporanic acid, colistin and thiamine. This is Acetyltransferase PA2271 from Pseudomonas aeruginosa (strain ATCC 15692 / DSM 22644 / CIP 104116 / JCM 14847 / LMG 12228 / 1C / PRS 101 / PAO1).